A 609-amino-acid chain; its full sequence is MANMIDKIDLKSQGSSNLSGEMTNHQKVGTLYKRLLLQVKHLWHFLLLAAIGSIFFSAADASMIYLINPILNYGFGPGGGITKQSATILMLMGVGMVGLLALRSVGSFVSQYFIGSLGQKVVYKFRKDIYKRLMGLPASFFDKHSTGQIISRLLYNVDQVTEATSTAIITVVQDGTFVIGLIVVMFVSSWQLSLFLIVVGPFLGLFISIINKKFRNLSRNTQSSMGNVTHTAEETIRNYKEIRIFGAQQKQQNKFFKNLDYTYSQQIRTIALDALTSPVIQIIASLVLAFSLFTIAIFGTNEGDGSSWLTAGSFASFFAAAAAILKPIKNLTKVNVVIQKAVAATEDIFYILDYPAEKETGSKELAKVDGNVTIKDLSFAFGEHKVLSGVSVDIKAGQTVAFVGKSGSGKTTLTSIISRFYTQHEGEILLDGVDTRELTLENLRSHLSIVSQNVHLFDDTVYNNIAFGLSREVSEEEVIDALKRANAYEFVQELSDGINTNIGNNGSKLSGGQRQRISIARALLKNAPVLIFDEATSALDNESERVVQQALESLTKSCTTIVIAHRLSTVENADKIVVMDGGMVVESGKHQELLEQGGLYTRLYQSGLQ.

Transmembrane regions (helical) follow at residues Leu-47–Ile-67, Ile-88–Phe-108, Ala-167–Val-187, Trp-190–Ile-210, Val-279–Gly-299, and Gly-305–Leu-325. In terms of domain architecture, ABC transmembrane type-1 spans Leu-47–Lys-340. An ABC transporter domain is found at Val-372–Ser-606. Residue Gly-404–Thr-411 coordinates ATP.

The protein belongs to the ABC transporter superfamily. Lipid exporter (TC 3.A.1.106) family. In terms of assembly, homodimer.

Its subcellular location is the cell inner membrane. It catalyses the reaction ATP + H2O + lipid A-core oligosaccharideSide 1 = ADP + phosphate + lipid A-core oligosaccharideSide 2.. Involved in lipopolysaccharide (LPS) biosynthesis. Translocates lipid A-core from the inner to the outer leaflet of the inner membrane. Transmembrane domains (TMD) form a pore in the inner membrane and the ATP-binding domain (NBD) is responsible for energy generation. The protein is ATP-dependent lipid A-core flippase of Francisella tularensis subsp. holarctica (strain LVS).